The sequence spans 180 residues: uncharacterized protein (180 aa).

Residues 114–136 show a composition bias toward basic and acidic residues; that stretch reads DKISESDSLPDEYKEYVVKHDSD. Residues 114–180 are disordered; that stretch reads DKISESDSLP…NFDNPDDNPK (67 aa). Positions 137 to 146 are enriched in acidic residues; it reads NSDNDSDNSD. Over residues 147 to 173 the composition is skewed to low complexity; the sequence is NDSNNSDNDSNNSDSDSDNSNDPNNFD.

This is an uncharacterized protein from Acanthamoeba polyphaga (Amoeba).